The sequence spans 205 residues: Holliday junction branch migration complex subunit RuvA (205 aa).

Residues 1 to 64 (MIGRLSGILV…EDAQLLYGFI (64 aa)) are domain I. Positions 65–143 (TKQERALFRL…SLLEASAGSE (79 aa)) are domain II. The interval 144–156 (REFMLQSNYTPAA) is flexible linker. The segment at 157–205 (AVDSAEEDAISALLSLGYKPAQASKSVSAAFKEGMSSETLIKAALKSML) is domain III.

This sequence belongs to the RuvA family. As to quaternary structure, homotetramer. Forms an RuvA(8)-RuvB(12)-Holliday junction (HJ) complex. HJ DNA is sandwiched between 2 RuvA tetramers; dsDNA enters through RuvA and exits via RuvB. An RuvB hexamer assembles on each DNA strand where it exits the tetramer. Each RuvB hexamer is contacted by two RuvA subunits (via domain III) on 2 adjacent RuvB subunits; this complex drives branch migration. In the full resolvosome a probable DNA-RuvA(4)-RuvB(12)-RuvC(2) complex forms which resolves the HJ.

It is found in the cytoplasm. Its function is as follows. The RuvA-RuvB-RuvC complex processes Holliday junction (HJ) DNA during genetic recombination and DNA repair, while the RuvA-RuvB complex plays an important role in the rescue of blocked DNA replication forks via replication fork reversal (RFR). RuvA specifically binds to HJ cruciform DNA, conferring on it an open structure. The RuvB hexamer acts as an ATP-dependent pump, pulling dsDNA into and through the RuvAB complex. HJ branch migration allows RuvC to scan DNA until it finds its consensus sequence, where it cleaves and resolves the cruciform DNA. The sequence is that of Holliday junction branch migration complex subunit RuvA from Shewanella frigidimarina (strain NCIMB 400).